Consider the following 854-residue polypeptide: Periodic tryptophan protein 2 homolog (854 aa).

13 WD repeats span residues 9-52, 53-93, 94-132, 144-183, 188-227, 252-291, 294-334, 337-376, 379-418, 422-464, 465-504, 507-546, and 569-608; these read NLVG…TFPF, ENHK…LHYF, NFKSPVGAIEFSPNGKFFAVSLGKLIQVWRTPNSLEERE, GHFDDIVSISWSADSRFFISTSKDLTARLHSVDPIEGFHP, GHKNTVVSGFFSKDQQTIYTVSKDGALFVWKYSPLFQAGE, NQNSKLRCAAFHPTSNLLVVGFSSGLFGIYELPSFTMLYQ, ITQS…YVLK, SHYDALSTLQYSSDGQRIITGADDGKIKVWDMNSGFCIVT, QHTSAVSGLCFSKRGNVLFSSSLDGSVRAWDLIRYRNFRT, PSRV…ETLA, GHEGPVSSLSFNSSGSLLASGSWDKTVRIWDIFSRSGIVE, PIPSDVLSLAFHPDGKEVCVASLDGQLTFWNVQEGKQTSL, and SLNKTFTSICYSADGSCVLSAGTSKYVCLYDIITGVLIKK. At threonine 640 the chain carries Phosphothreonine. Serine 645 carries the phosphoserine modification. The WD 14 repeat unit spans residues 668-709; that stretch reads TRPEIICHGVQFSPSGGAFAAATTEGLMIYSLYNDFLFDPIN.

This sequence belongs to the WD repeat PWP2 family.

The protein is Periodic tryptophan protein 2 homolog of Schizosaccharomyces pombe (strain 972 / ATCC 24843) (Fission yeast).